The sequence spans 51 residues: Large ribosomal subunit protein eL39 (51 aa).

The protein belongs to the eukaryotic ribosomal protein eL39 family.

In Drosophila melanogaster (Fruit fly), this protein is Large ribosomal subunit protein eL39 (RpL39).